The primary structure comprises 1067 residues: Carbamoyl phosphate synthase large chain (1067 aa).

A carboxyphosphate synthetic domain region spans residues 1–401 (MPLNKDIKKV…AFLKGIRSLE (401 aa)). The ATP site is built by Arg129, Arg169, Gly175, Gly176, Lys208, Val210, Glu215, Gly241, Ile242, His243, Gln284, and Glu298. Residues 133 to 327 (RDMMNRINQP…IAKVAAKIAL (195 aa)) enclose the ATP-grasp 1 domain. Gln284, Glu298, and Asn300 together coordinate Mg(2+). Mn(2+) contacts are provided by Gln284, Glu298, and Asn300. An oligomerization domain region spans residues 402–549 (IGKYSLEHKK…YSTYEQYDEV (148 aa)). A carbamoyl phosphate synthetic domain region spans residues 550 to 932 (VVSDNKKVVV…ALYKGFVGAS (383 aa)). Residues 674-864 (DDLLERLNIA…IVDIATRIML (191 aa)) form the ATP-grasp 2 domain. Residues Arg710, Lys749, Leu751, Glu755, Gly780, Val781, His782, Ser783, Gln823, and Glu835 each coordinate ATP. The Mg(2+) site is built by Gln823, Glu835, and Asn837. Mn(2+) contacts are provided by Gln823, Glu835, and Asn837. The MGS-like domain maps to 933–1067 (MYTGDKGKTI…NRELEVFNLI (135 aa)). Positions 933 to 1067 (MYTGDKGKTI…NRELEVFNLI (135 aa)) are allosteric domain.

Belongs to the CarB family. Composed of two chains; the small (or glutamine) chain promotes the hydrolysis of glutamine to ammonia, which is used by the large (or ammonia) chain to synthesize carbamoyl phosphate. Tetramer of heterodimers (alpha,beta)4. Mg(2+) serves as cofactor. It depends on Mn(2+) as a cofactor.

The enzyme catalyses hydrogencarbonate + L-glutamine + 2 ATP + H2O = carbamoyl phosphate + L-glutamate + 2 ADP + phosphate + 2 H(+). The catalysed reaction is hydrogencarbonate + NH4(+) + 2 ATP = carbamoyl phosphate + 2 ADP + phosphate + 2 H(+). The protein operates within amino-acid biosynthesis; L-arginine biosynthesis; carbamoyl phosphate from bicarbonate: step 1/1. Its pathway is pyrimidine metabolism; UMP biosynthesis via de novo pathway; (S)-dihydroorotate from bicarbonate: step 1/3. Large subunit of the glutamine-dependent carbamoyl phosphate synthetase (CPSase). CPSase catalyzes the formation of carbamoyl phosphate from the ammonia moiety of glutamine, carbonate, and phosphate donated by ATP, constituting the first step of 2 biosynthetic pathways, one leading to arginine and/or urea and the other to pyrimidine nucleotides. The large subunit (synthetase) binds the substrates ammonia (free or transferred from glutamine from the small subunit), hydrogencarbonate and ATP and carries out an ATP-coupled ligase reaction, activating hydrogencarbonate by forming carboxy phosphate which reacts with ammonia to form carbamoyl phosphate. The chain is Carbamoyl phosphate synthase large chain from Clostridium perfringens (strain 13 / Type A).